Consider the following 44-residue polypeptide: U2-agatoxin-Ao1s (44 aa).

Residues Lys-1 to Leu-9 constitute a propeptide that is removed on maturation. Cystine bridges form between Cys-12/Cys-28, Cys-19/Cys-33, and Cys-27/Cys-43.

This sequence belongs to the neurotoxin 01 (U2-agtx) family. As to expression, expressed by the venom gland.

It localises to the secreted. Insect active toxin causing rapid but reversible paralysis in crickets. No activity shown in mammals. Does not show effect on mammalian voltage-gated calcium channels. The chain is U2-agatoxin-Ao1s from Agelena orientalis (Funnel-web spider).